The following is a 428-amino-acid chain: Elongation factor 1-alpha (428 aa).

Residues 5–225 (KPILNVAFIG…DGFQPPEKPT (221 aa)) form the tr-type G domain. The tract at residues 14–21 (GHVDAGKS) is G1. GTP is bound at residue 14–21 (GHVDAGKS). Serine 21 contacts Mg(2+). The interval 70–74 (GVTID) is G2. The interval 91–94 (DCPG) is G3. Residues 91 to 95 (DCPGH) and 149 to 152 (NKMD) each bind GTP. Positions 149-152 (NKMD) are G4. Residues 189–191 (ASL) are G5.

This sequence belongs to the TRAFAC class translation factor GTPase superfamily. Classic translation factor GTPase family. EF-Tu/EF-1A subfamily.

It localises to the cytoplasm. The catalysed reaction is GTP + H2O = GDP + phosphate + H(+). In terms of biological role, GTP hydrolase that promotes the GTP-dependent binding of aminoacyl-tRNA to the A-site of ribosomes during protein biosynthesis. In Methanococcus vannielii (strain ATCC 35089 / DSM 1224 / JCM 13029 / OCM 148 / SB), this protein is Elongation factor 1-alpha.